The following is a 622-amino-acid chain: 1,4-alpha-glucan branching enzyme GlgB (622 aa).

Asp300 functions as the Nucleophile in the catalytic mechanism. Glu351 acts as the Proton donor in catalysis.

Belongs to the glycosyl hydrolase 13 family. GlgB subfamily. As to quaternary structure, monomer.

The enzyme catalyses Transfers a segment of a (1-&gt;4)-alpha-D-glucan chain to a primary hydroxy group in a similar glucan chain.. It participates in glycan biosynthesis; glycogen biosynthesis. In terms of biological role, catalyzes the formation of the alpha-1,6-glucosidic linkages in glycogen by scission of a 1,4-alpha-linked oligosaccharide from growing alpha-1,4-glucan chains and the subsequent attachment of the oligosaccharide to the alpha-1,6 position. The polypeptide is 1,4-alpha-glucan branching enzyme GlgB (Streptococcus agalactiae serotype III (strain NEM316)).